The chain runs to 199 residues: OPA3-like protein (199 aa).

A coiled-coil region spans residues 98 to 141 (RSSEKDKKKEEALQNRFKNLEEKLEVQQETINNLTNVIEAIQSS).

The protein belongs to the OPA3 family.

The sequence is that of OPA3-like protein from Dictyostelium discoideum (Social amoeba).